Here is a 91-residue protein sequence, read N- to C-terminus: Acylphosphatase (91 aa).

In terms of domain architecture, Acylphosphatase-like spans 5–91 (WKKWNVRGVV…QEYKDFHVEF (87 aa)). Catalysis depends on residues Arg-20 and Asn-38.

Belongs to the acylphosphatase family.

It catalyses the reaction an acyl phosphate + H2O = a carboxylate + phosphate + H(+). This Fervidobacterium nodosum (strain ATCC 35602 / DSM 5306 / Rt17-B1) protein is Acylphosphatase (acyP).